Here is a 376-residue protein sequence, read N- to C-terminus: Dihydroorotate dehydrogenase (quinone) (376 aa).

FMN-binding positions include 78–82 (AGFDK) and threonine 102. Lysine 82 lines the substrate pocket. Residue 127 to 131 (NRMGF) participates in substrate binding. FMN contacts are provided by asparagine 157 and asparagine 190. Asparagine 190 contacts substrate. Catalysis depends on serine 193, which acts as the Nucleophile. Residue asparagine 195 coordinates substrate. Lysine 228 and threonine 256 together coordinate FMN. 257–258 (NT) contributes to the substrate binding site. FMN is bound by residues glycine 286, glycine 315, and 336–337 (YT).

The protein belongs to the dihydroorotate dehydrogenase family. Type 2 subfamily. Monomer. FMN serves as cofactor.

The protein resides in the cell membrane. It carries out the reaction (S)-dihydroorotate + a quinone = orotate + a quinol. It functions in the pathway pyrimidine metabolism; UMP biosynthesis via de novo pathway; orotate from (S)-dihydroorotate (quinone route): step 1/1. Functionally, catalyzes the conversion of dihydroorotate to orotate with quinone as electron acceptor. This is Dihydroorotate dehydrogenase (quinone) from Trichormus variabilis (strain ATCC 29413 / PCC 7937) (Anabaena variabilis).